The primary structure comprises 156 residues: Endoribonuclease YbeY (156 aa).

Residues H122, H126, and H132 each coordinate Zn(2+).

This sequence belongs to the endoribonuclease YbeY family. It depends on Zn(2+) as a cofactor.

Its subcellular location is the cytoplasm. Its function is as follows. Single strand-specific metallo-endoribonuclease involved in late-stage 70S ribosome quality control and in maturation of the 3' terminus of the 16S rRNA. This chain is Endoribonuclease YbeY, found in Geobacillus thermodenitrificans (strain NG80-2).